A 685-amino-acid polypeptide reads, in one-letter code: Putative alpha-1,3-mannosyltransferase MNN14 (685 aa).

Residues 1–13 (MGLLSIPYQSKSK) lie on the Cytoplasmic side of the membrane. A helical transmembrane segment spans residues 14–34 (LWIAIFLVVWSLISMHFIWQS). Residues 35-685 (QANSGLILKN…EIWMRGYNYL (651 aa)) lie on the Lumenal side of the membrane. N-linked (GlcNAc...) asparagine glycosylation is found at asparagine 199, asparagine 338, asparagine 408, and asparagine 556.

It belongs to the MNN1/MNT family.

Its subcellular location is the golgi apparatus membrane. It participates in protein modification; protein glycosylation. Functionally, responsible for addition of the terminal mannose residues to the outer chain of core N-linked polysaccharides and to O-linked mannotriose. Implicated in late Golgi modifications. Involved in virulence. The sequence is that of Putative alpha-1,3-mannosyltransferase MNN14 (MNN14) from Candida albicans (strain SC5314 / ATCC MYA-2876) (Yeast).